Consider the following 88-residue polypeptide: LYR motif-containing protein 2 (88 aa).

A mitochondrion-targeting transit peptide spans 1–19 (MATSRLPPATLTLKQFMRR).

The protein belongs to the complex I LYR family.

Its subcellular location is the mitochondrion. Involved in efficient integration of the N-module into mitochondrial respiratory chain complex I. This is LYR motif-containing protein 2 (LYRM2) from Bos taurus (Bovine).